The primary structure comprises 558 residues: Phosphatidylserine lipase ABHD16A (558 aa).

A run of 2 helical transmembrane segments spans residues 60–80 (ILALASVFWSISYYSSPFAFF) and 93–113 (VVPFSHYAGTLLLLLAGVACL). At 114 to 558 (RGIGRWTNPQ…AQNFQMPWHL (445 aa)) the chain is on the cytoplasmic side. The AB hydrolase-1 domain occupies 281–407 (LVICCEGNAG…LVTRTVRQHL (127 aa)). Catalysis depends on charge relay system residues Ser-355, Asp-430, and His-507.

It belongs to the AB hydrolase superfamily. ABHD16 family.

It localises to the membrane. The enzyme catalyses 1-heptadecanoyl-2-(5Z,8Z,11Z,14Z-eicosatetraenoyl)-sn-glycero-3-phosphoserine + H2O = 1-heptadecanoyl-sn-glycero-3-phosphoserine + (5Z,8Z,11Z,14Z)-eicosatetraenoate + H(+). It catalyses the reaction 1-hexadecanoyl-2-(9Z-octadecenoyl)-sn-glycero-3-phospho-L-serine + H2O = 1-hexadecanoyl-sn-glycero-3-phospho-L-serine + (9Z)-octadecenoate + H(+). The catalysed reaction is 1-octadecanoyl-2-(9Z,12Z-octadecadienoyl)-sn-glycero-3-phosphoserine + H2O = 1-octadecanoyl-sn-glycero-3-phosphoserine + (9Z,12Z)-octadecadienoate + H(+). It carries out the reaction 1-heptadecanoyl-2-(5Z,8Z,11Z,14Z-eicosatetraenoyl)-sn-glycero-3-phosphocholine + H2O = 1-heptadecanoyl-sn-glycero-3-phosphocholine + (5Z,8Z,11Z,14Z)-eicosatetraenoate + H(+). The enzyme catalyses 1-hexadecanoyl-2-(9Z-octadecenoyl)-sn-glycero-3-phosphoglycerol + H2O = 1-hexadecanoyl-sn-glycero-3-phosphoglycerol + (9Z)-octadecenoate + H(+). It catalyses the reaction 1-hexadecanoyl-2-(9Z-octadecenoyl)-sn-glycero-3-phospho-(1D-myo-inositol) + H2O = 1-hexadecanoyl-sn-glycero-3-phospho-(1D-myo-inositol) + (9Z)-octadecenoate + H(+). The catalysed reaction is 1-heptadecanoyl-2-(5Z,8Z,11Z,14Z-eicosatetraenoyl)-sn-glycero-3-phosphoethanolamine + H2O = 1-heptadecanoyl-sn-glycero-3-phosphoethanolamine + (5Z,8Z,11Z,14Z)-eicosatetraenoate + H(+). It carries out the reaction 1-hexadecanoyl-2-(9Z-octadecenoyl)-sn-glycero-3-phospho-(1'-sn-glycerol) + H2O = 1-hexadecanoyl-sn-glycero-3-phospho-(1'-sn-glycerol) + (9Z)-octadecenoate + H(+). The enzyme catalyses Hydrolyzes glycerol monoesters of long-chain fatty acids.. It catalyses the reaction 1-tetradecanoylglycerol + H2O = tetradecanoate + glycerol + H(+). The catalysed reaction is 2-hexadecanoylglycerol + H2O = glycerol + hexadecanoate + H(+). It carries out the reaction 1-(9Z-octadecenoyl)-glycerol + H2O = glycerol + (9Z)-octadecenoate + H(+). The enzyme catalyses 2-(9Z-octadecenoyl)-glycerol + H2O = glycerol + (9Z)-octadecenoate + H(+). It catalyses the reaction 2-(9Z,12Z-octadecadienoyl)-glycerol + H2O = (9Z,12Z)-octadecadienoate + glycerol + H(+). The catalysed reaction is 1-(5Z,8Z,11Z,14Z-eicosatetraenoyl)-glycerol + H2O = glycerol + (5Z,8Z,11Z,14Z)-eicosatetraenoate + H(+). It carries out the reaction 2-(5Z,8Z,11Z,14Z-eicosatetraenoyl)-glycerol + H2O = glycerol + (5Z,8Z,11Z,14Z)-eicosatetraenoate + H(+). The enzyme catalyses prostaglandin D2-1-glycerol ester + H2O = prostaglandin D2 + glycerol + H(+). It catalyses the reaction 2-glyceryl-15-deoxy-Delta(12,14)-prostaglandin J2 + H2O = 15-deoxy-Delta(12,14)-prostaglandin J2 + glycerol + H(+). The catalysed reaction is 1-(9Z,12Z-octadecadienoyl)-glycerol + H2O = (9Z,12Z)-octadecadienoate + glycerol + H(+). Phosphatidylserine (PS) lipase that mediates the hydrolysis of phosphatidylserine to generate lysophosphatidylserine (LPS). LPS constitutes a class of signaling lipids that regulates immunological and neurological processes. Has no activity towards diacylglycerol, triacylglycerol or lysophosphatidylserine lipase. Also has monoacylglycerol lipase activity, with preference for 1-(9Z,12Z-octadecadienoyl)-glycerol (1-LG) and 2-glyceryl-15-deoxy-Delta(12,14)-prostaglandin J2 (15d-PGJ(2)-G). This chain is Phosphatidylserine lipase ABHD16A, found in Macaca fascicularis (Crab-eating macaque).